Here is a 322-residue protein sequence, read N- to C-terminus: Acetylglutamate kinase (322 aa).

Substrate contacts are provided by residues 85–86 (GG), Arg-107, and Asn-211.

It belongs to the acetylglutamate kinase family. ArgB subfamily.

The protein localises to the cytoplasm. It catalyses the reaction N-acetyl-L-glutamate + ATP = N-acetyl-L-glutamyl 5-phosphate + ADP. It participates in amino-acid biosynthesis; L-arginine biosynthesis; N(2)-acetyl-L-ornithine from L-glutamate: step 2/4. Its function is as follows. Catalyzes the ATP-dependent phosphorylation of N-acetyl-L-glutamate. This chain is Acetylglutamate kinase, found in Methanosarcina barkeri (strain Fusaro / DSM 804).